The following is a 658-amino-acid chain: Glycogen debranching enzyme (658 aa).

Asp336 (nucleophile) is an active-site residue. Catalysis depends on Glu371, which acts as the Proton donor. The segment at 459-484 (EANGEENRDGTNSNYSDNHGKEGLGG) is disordered.

It belongs to the glycosyl hydrolase 13 family.

It catalyses the reaction Hydrolysis of (1-&gt;6)-alpha-D-glucosidic linkages to branches with degrees of polymerization of three or four glucose residues in limit dextrin.. Its pathway is glycan degradation; glycogen degradation. Removes maltotriose and maltotetraose chains that are attached by 1,6-alpha-linkage to the limit dextrin main chain, generating a debranched limit dextrin. In Salmonella choleraesuis (strain SC-B67), this protein is Glycogen debranching enzyme.